Reading from the N-terminus, the 152-residue chain is MHCPYCNASETKVIDSRLAAEGAQVRRRRSCNSCQERFTTFEVVEVVMPRIIKSSGKIEPYDNDKLRRSILLPLQKRPITIDEQEGMISRIEKRVRQMGEREVSSKVLGEIIMSELKTLDDVAYVRFASVYRDFQDIDAFHQEIANIRPNEK.

The segment at 3 to 34 (CPYCNASETKVIDSRLAAEGAQVRRRRSCNSC) is a zinc-finger region. An ATP-cone domain is found at 49 to 139 (PRIIKSSGKI…VYRDFQDIDA (91 aa)).

The protein belongs to the NrdR family. Requires Zn(2+) as cofactor.

Functionally, negatively regulates transcription of bacterial ribonucleotide reductase nrd genes and operons by binding to NrdR-boxes. The sequence is that of Transcriptional repressor NrdR from Psychrobacter cryohalolentis (strain ATCC BAA-1226 / DSM 17306 / VKM B-2378 / K5).